Consider the following 217-residue polypeptide: Protein-L-isoaspartate O-methyltransferase (217 aa).

Ser-64 is a catalytic residue.

Belongs to the methyltransferase superfamily. L-isoaspartyl/D-aspartyl protein methyltransferase family.

The protein resides in the cytoplasm. The enzyme catalyses [protein]-L-isoaspartate + S-adenosyl-L-methionine = [protein]-L-isoaspartate alpha-methyl ester + S-adenosyl-L-homocysteine. Catalyzes the methyl esterification of L-isoaspartyl residues in peptides and proteins that result from spontaneous decomposition of normal L-aspartyl and L-asparaginyl residues. It plays a role in the repair and/or degradation of damaged proteins. This chain is Protein-L-isoaspartate O-methyltransferase, found in Rhodopseudomonas palustris (strain BisB5).